A 210-amino-acid polypeptide reads, in one-letter code: Mitochondrial cardiolipin hydrolase (210 aa).

At 1–5 (MLLWG) the chain is on the mitochondrial intermembrane side. Residues 6 to 24 (RWKLAAGLAGLALSLELFY) form a helical membrane-spanning segment. Residues 25–210 (RYMRRRKPLR…YNFFPEKENK (186 aa)) are Cytoplasmic-facing. The PLD phosphodiesterase domain occupies 138-165 (SSGYMHHKFAVVDGTVVLTGSLNWTVQA). Residues H143, K145, and D150 contribute to the active site.

The protein belongs to the phospholipase D family. MitoPLD/Zucchini subfamily. In terms of assembly, homodimer.

The protein localises to the mitochondrion outer membrane. The catalysed reaction is a cardiolipin + H2O = a 1,2-diacyl-sn-glycero-3-phospho-(1'-sn-glycerol) + a 1,2-diacyl-sn-glycero-3-phosphate + H(+). Functionally, presents phospholipase and nuclease activities, depending on the different physiological conditions. Plays a key role in mitochondrial fusion and fission via its phospholipase activity. In its phospholipase role, it uses the mitochondrial lipid cardiolipin as substrate to generate phosphatidate (PA or 1,2-diacyl-sn-glycero-3-phosphate), a second messenger signaling lipid. Production of PA facilitates Mitofusin-mediated fusion, whereas the cleavage of PA by the Lipin family of phosphatases produces diacylgycerol (DAG) which promotes mitochondrial fission. Regulates mitochondrial shape through facilitating mitochondrial fusion. During spermatogenesis, plays a critical role in PIWI-interacting RNA (piRNA) biogenesis. piRNAs provide essential protection against the activity of mobile genetic elements. piRNA-mediated transposon silencing is thus critical for maintaining genome stability, in particular in germline cells when transposons are mobilized as a consequence of wide-spread genomic demethylation. Has been shown to be a backbone-non-specific, single strand-specific nuclease, cleaving either RNA or DNA substrates with similar affinity. Produces 5' phosphate and 3' hydroxyl termini, suggesting it could directly participate in the processing of primary piRNA transcripts. Has been proposed to act as a cardiolipin hydrolase to generate phosphatidic acid at mitochondrial surface. Although it cannot be excluded that it can act as a phospholipase in some circumstances, this activity could not be confirmed. This Xenopus laevis (African clawed frog) protein is Mitochondrial cardiolipin hydrolase (pld6).